The sequence spans 173 residues: Large ribosomal subunit protein uL5 (173 aa).

The protein belongs to the universal ribosomal protein uL5 family. In terms of assembly, component of the large ribosomal subunit.

Its subcellular location is the nucleus. It is found in the cytoplasm. In terms of biological role, component of the ribosome, a large ribonucleoprotein complex responsible for the synthesis of proteins in the cell. The small ribosomal subunit (SSU) binds messenger RNAs (mRNAs) and translates the encoded message by selecting cognate aminoacyl-transfer RNA (tRNA) molecules. The large subunit (LSU) contains the ribosomal catalytic site termed the peptidyl transferase center (PTC), which catalyzes the formation of peptide bonds, thereby polymerizing the amino acids delivered by tRNAs into a polypeptide chain. The nascent polypeptides leave the ribosome through a tunnel in the LSU and interact with protein factors that function in enzymatic processing, targeting, and the membrane insertion of nascent chains at the exit of the ribosomal tunnel. This Encephalitozoon cuniculi (strain GB-M1) (Microsporidian parasite) protein is Large ribosomal subunit protein uL5 (RPL11).